Consider the following 145-residue polypeptide: D-aminoacyl-tRNA deacylase (145 aa).

A Gly-cisPro motif, important for rejection of L-amino acids motif is present at residues 137-138 (GP).

This sequence belongs to the DTD family. In terms of assembly, homodimer.

Its subcellular location is the cytoplasm. It catalyses the reaction glycyl-tRNA(Ala) + H2O = tRNA(Ala) + glycine + H(+). The enzyme catalyses a D-aminoacyl-tRNA + H2O = a tRNA + a D-alpha-amino acid + H(+). In terms of biological role, an aminoacyl-tRNA editing enzyme that deacylates mischarged D-aminoacyl-tRNAs. Also deacylates mischarged glycyl-tRNA(Ala), protecting cells against glycine mischarging by AlaRS. Acts via tRNA-based rather than protein-based catalysis; rejects L-amino acids rather than detecting D-amino acids in the active site. By recycling D-aminoacyl-tRNA to D-amino acids and free tRNA molecules, this enzyme counteracts the toxicity associated with the formation of D-aminoacyl-tRNA entities in vivo and helps enforce protein L-homochirality. The polypeptide is D-aminoacyl-tRNA deacylase (Klebsiella pneumoniae (strain 342)).